We begin with the raw amino-acid sequence, 420 residues long: 2',3'-cyclic-nucleotide 3'-phosphodiesterase (420 aa).

S9 is modified (phosphoserine). A Phosphotyrosine modification is found at Y110. Residues S169, S227, and S239 each carry the phosphoserine modification. The active-site Proton acceptor is H250. T252 serves as a coordination point for substrate. H329 acts as the Proton donor in catalysis. T331 contributes to the substrate binding site. S358 bears the Phosphoserine mark. C417 bears the Cysteine methyl ester mark. Residue C417 is the site of S-farnesyl cysteine attachment. Residues 418-420 (TII) constitute a propeptide, removed in mature form.

It belongs to the 2H phosphoesterase superfamily. CNPase family. As to quaternary structure, exists as monomers and homodimers.

Its subcellular location is the membrane. It localises to the melanosome. It catalyses the reaction a nucleoside 2',3'-cyclic phosphate + H2O = a nucleoside 2'-phosphate + H(+). Its function is as follows. Catalyzes the formation of 2'-nucleotide products from 2',3'-cyclic substrates. May participate in RNA metabolism in the myelinating cell, CNP is the third most abundant protein in central nervous system myelin. This is 2',3'-cyclic-nucleotide 3'-phosphodiesterase from Mus musculus (Mouse).